We begin with the raw amino-acid sequence, 80 residues long: U19-lycotoxin-Ls1a (80 aa).

The first 22 residues, 1–22 (MSPKVQALIFIVGLITLLAAHA), serve as a signal peptide directing secretion. Residues 23 to 34 (QEELSDNTESER) constitute a propeptide that is removed on maturation. 4 cysteine pairs are disulfide-bonded: Cys36-Cys50, Cys43-Cys55, Cys49-Cys66, and Cys57-Cys64.

Belongs to the neurotoxin 02 (plectoxin) family. 05 (U19-lycotoxin) subfamily. In terms of tissue distribution, expressed by the venom gland.

It localises to the secreted. This Lycosa singoriensis (Wolf spider) protein is U19-lycotoxin-Ls1a.